The following is a 159-amino-acid chain: Putative 4-hydroxy-4-methyl-2-oxoglutarate aldolase (159 aa).

Substrate contacts are provided by residues 75–78 (GDQL) and Arg97. Residue Asp98 coordinates a divalent metal cation.

The protein belongs to the class II aldolase/RraA-like family. As to quaternary structure, homotrimer. It depends on a divalent metal cation as a cofactor.

The catalysed reaction is 4-hydroxy-4-methyl-2-oxoglutarate = 2 pyruvate. It carries out the reaction oxaloacetate + H(+) = pyruvate + CO2. Functionally, catalyzes the aldol cleavage of 4-hydroxy-4-methyl-2-oxoglutarate (HMG) into 2 molecules of pyruvate. Also contains a secondary oxaloacetate (OAA) decarboxylase activity due to the common pyruvate enolate transition state formed following C-C bond cleavage in the retro-aldol and decarboxylation reactions. This is Putative 4-hydroxy-4-methyl-2-oxoglutarate aldolase from Laribacter hongkongensis (strain HLHK9).